A 252-amino-acid chain; its full sequence is Cysteine-rich repeat secretory protein 38 (252 aa).

The N-terminal stretch at 1–27 is a signal peptide; that stretch reads MSSLKRIVWFPILAIAIQILSIHTVLS. Gnk2-homologous domains lie at 34–136 and 142–248; these read FLFH…STNF and FENR…IYPF.

This sequence belongs to the cysteine-rich repeat secretory protein family.

The protein localises to the secreted. This is Cysteine-rich repeat secretory protein 38 (CRRSP38) from Arabidopsis thaliana (Mouse-ear cress).